The chain runs to 352 residues: Ion-translocating oxidoreductase complex subunit D (352 aa).

4 consecutive transmembrane segments (helical) span residues 20 to 40 (IMLL…WFFG), 42 to 62 (GTLV…ALVL), 89 to 109 (IPPL…AIIA), and 123 to 143 (PAMI…TSWL). Thr187 bears the FMN phosphoryl threonine mark. The next 5 membrane-spanning stretches (helical) occupy residues 214 to 234 (ILAG…GLWL), 242 to 262 (WHIP…GWLF), 267 to 287 (LAAP…FFIL), 301 to 321 (LIFG…GGYP), and 322 to 342 (DGVA…DYYT).

The protein belongs to the NqrB/RnfD family. As to quaternary structure, the complex is composed of six subunits: RsxA, RsxB, RsxC, RsxD, RsxE and RsxG. Requires FMN as cofactor.

It localises to the cell inner membrane. Part of a membrane-bound complex that couples electron transfer with translocation of ions across the membrane. Required to maintain the reduced state of SoxR. This Escherichia coli (strain ATCC 8739 / DSM 1576 / NBRC 3972 / NCIMB 8545 / WDCM 00012 / Crooks) protein is Ion-translocating oxidoreductase complex subunit D.